The chain runs to 62 residues: Single-pass membrane and coiled-coil domain-containing protein 4 homolog (62 aa).

Residues 1–27 are disordered; sequence MRQLPGKAAKETRKMKRERKQQNKEGH. Positions 9–31 form a coiled coil; the sequence is AKETRKMKRERKQQNKEGHNRVV. The helical transmembrane segment at 30 to 50 threads the bilayer; it reads VVTVAIPVCLAVFVMLIVYVY.

It belongs to the SMCO4 family.

The protein localises to the membrane. The polypeptide is Single-pass membrane and coiled-coil domain-containing protein 4 homolog (Nematostella vectensis (Starlet sea anemone)).